Here is a 217-residue protein sequence, read N- to C-terminus: Ribonuclease HII (217 aa).

Positions serine 27 to cysteine 216 constitute an RNase H type-2 domain. Positions 33, 34, and 126 each coordinate a divalent metal cation.

This sequence belongs to the RNase HII family. Requires Mn(2+) as cofactor. It depends on Mg(2+) as a cofactor.

The protein resides in the cytoplasm. The enzyme catalyses Endonucleolytic cleavage to 5'-phosphomonoester.. Its function is as follows. Endonuclease that specifically degrades the RNA of RNA-DNA hybrids. This chain is Ribonuclease HII, found in Chlamydia trachomatis serovar A (strain ATCC VR-571B / DSM 19440 / HAR-13).